The following is a 407-amino-acid chain: D-3-phosphoglycerate dehydrogenase (407 aa).

NAD(+) contacts are provided by residues 161–162, Asp181, 238–240, and Asp264; these read HI and ASR. Arg240 is an active-site residue. Glu269 is an active-site residue. The Proton donor role is filled by His292. 292–295 is a binding site for NAD(+); the sequence is HIGG. The 68-residue stretch at 340–407 folds into the ACT domain; sequence RILNIHNNKP…PNSIKTRVLY (68 aa).

Belongs to the D-isomer specific 2-hydroxyacid dehydrogenase family.

The enzyme catalyses (2R)-3-phosphoglycerate + NAD(+) = 3-phosphooxypyruvate + NADH + H(+). It carries out the reaction (R)-2-hydroxyglutarate + NAD(+) = 2-oxoglutarate + NADH + H(+). It participates in amino-acid biosynthesis; L-serine biosynthesis; L-serine from 3-phospho-D-glycerate: step 1/3. Catalyzes the reversible oxidation of 3-phospho-D-glycerate to 3-phosphonooxypyruvate, the first step of the phosphorylated L-serine biosynthesis pathway. Also catalyzes the reversible oxidation of 2-hydroxyglutarate to 2-oxoglutarate. The polypeptide is D-3-phosphoglycerate dehydrogenase (serA) (Dictyostelium discoideum (Social amoeba)).